The sequence spans 492 residues: Trehalose-6-phosphate synthase (492 aa).

Arg-25 provides a ligand contact to D-glucose 6-phosphate. Residue 45–46 (GG) coordinates UDP-alpha-D-glucose. D-glucose 6-phosphate contacts are provided by Tyr-101 and Asp-155. UDP-alpha-D-glucose-binding residues include Arg-297 and Lys-302. Arg-335 is a binding site for D-glucose 6-phosphate. Residue 400–404 (LVAKE) participates in UDP-alpha-D-glucose binding.

Belongs to the glycosyltransferase 20 family. Homotetramer.

It carries out the reaction ADP-alpha-D-glucose + D-glucose 6-phosphate = alpha,alpha-trehalose 6-phosphate + ADP + H(+). The enzyme catalyses CDP-alpha-D-glucose + D-glucose 6-phosphate = alpha,alpha-trehalose 6-phosphate + CDP + H(+). It catalyses the reaction GDP-alpha-D-glucose + D-glucose 6-phosphate = alpha,alpha-trehalose 6-phosphate + GDP + H(+). The catalysed reaction is TDP-alpha-D-glucose + D-glucose 6-phosphate = 5-methyl-UDP + alpha,alpha-trehalose 6-phosphate + H(+). It carries out the reaction D-glucose 6-phosphate + UDP-alpha-D-glucose = alpha,alpha-trehalose 6-phosphate + UDP + H(+). It functions in the pathway glycan biosynthesis; trehalose biosynthesis. Functionally, probably involved in the osmoprotection via the biosynthesis of trehalose and in the production of glycogen and alpha-glucan via the TreS-Pep2 branch involved in the biosynthesis of maltose-1-phosphate (M1P). Catalyzes the transfer of glucose from UDP-glucose (UDP-Glc) to D-glucose 6-phosphate (Glc-6-P) to form trehalose-6-phosphate. Probably also able to use ADP-Glc, CDP-Glc, GDP-Glc and TDP-Glc as glucosyl donors. This chain is Trehalose-6-phosphate synthase, found in Mycolicibacterium paratuberculosis (strain ATCC BAA-968 / K-10) (Mycobacterium paratuberculosis).